The primary structure comprises 1538 residues: Arf-GAP with Rho-GAP domain, ANK repeat and PH domain-containing protein 3 (1538 aa).

Residues 4–68 form the SAM domain; it reads PQDLDIAVWL…LRLLRAGSAE (65 aa). Disordered stretches follow at residues 72-97, 125-149, and 215-242; these read DSHLDNTMEPTPSPAPDAQPPKPVPK, SRNSECTQRSSPLLPSSSEQPSVPN, and ASDRRDGRGVCQERAEHRQDLETREDAG. Positions 82–97 are enriched in pro residues; that stretch reads TPSPAPDAQPPKPVPK. Residues 216–241 are compositionally biased toward basic and acidic residues; sequence SDRRDGRGVCQERAEHRQDLETREDA. PH domains lie at 282–374 and 389–478; these read VPLL…SCLK and RPLR…EAVT. One can recognise an Arf-GAP domain in the interval 479-606; it reads ETLSDYEVAE…LFRKPHPRHP (128 aa). 2 PH domains span residues 671-785 and 795-901; these read ATYR…FSPL and LLRM…AGGG. Positions 903–1084 constitute a Rho-GAP domain; the sequence is TGLQEQQMSR…ELIDGYISVF (182 aa). One can recognise a Ras-associating domain in the interval 1113–1206; sequence GDLIMEVYIE…ASLLLRKVSM (94 aa). The 103-residue stretch at 1219–1321 folds into the PH 5 domain; it reads ESPRVGLLRC…WTTSILKAQH (103 aa). Thr1344 carries the phosphothreonine modification. Residues Tyr1399 and Tyr1404 each carry the phosphotyrosine modification. Polar residues predominate over residues 1425-1439; that stretch reads WSAKSDPSLTSQRSF. The tract at residues 1425–1538 is disordered; that stretch reads WSAKSDPSLT…SNPPSSQPLT (114 aa). Phosphoserine occurs at positions 1438 and 1474. 2 stretches are compositionally biased toward low complexity: residues 1476–1486 and 1494–1505; these read EEQLLQELNNL and ASCPESSSQPTS. A compositionally biased stretch (pro residues) spans 1506 to 1529; sequence PQAPSPTSLPTPTPSLPTQPPCTS.

In terms of assembly, interacts (via SAM domain) with INPPL1/SHIP2. Post-translationally, tyrosine phosphorylated at a low basal level. PDGF treatment stimulates phosphorylation. Tyrosine phosphorylation is increased in cells that are in the process of becoming attached to a substrate and that start spreading and flattening.

Its subcellular location is the cytoplasm. The protein localises to the cell membrane. It localises to the cytoskeleton. It is found in the cell projection. The protein resides in the lamellipodium. Its subcellular location is the ruffle. In terms of biological role, phosphatidylinositol 3,4,5-trisphosphate-dependent GTPase-activating protein that modulates actin cytoskeleton remodeling by regulating ARF and RHO family members. Is activated by phosphatidylinositol 3,4,5-trisphosphate (PtdIns(3,4,5)P3) binding. Can be activated by phosphatidylinositol 3,4-bisphosphate (PtdIns(3,4,5)P2) binding, albeit with lower efficiency. Acts preferentially on ARF5 and on RHOA. This is Arf-GAP with Rho-GAP domain, ANK repeat and PH domain-containing protein 3 (Arap3) from Mus musculus (Mouse).